The primary structure comprises 400 residues: MNSVDIGRYKRIINYLWDPEPRNDLPDEPIWCLGIRYPPNHRGWKTQDQDGSAQGQYEQKTIPTEKANEHQWPEEFLDDVESRIWITYRSNFTPIPKPPNQEANPAMTLTVHLRSQLMDSQGFTSDTGWGCMIRSGQSLLANAMLILLLGRDWRRGTEAGKEAQLLHQFADHPEAPFSIHRFVQHGAEFCNKYPGEWFGPSATARCIQALVAQQGSSELRVYITDDTADIYEDKFARIAQAEHGDFIPTLILVGTRLGIDHVTPAYWDALKEALQLPQSVGIAGGRPSASHYFIGVHGQYLFYLDPHHTRPASLHQDVNDTLTHEEVNTYHTRRLRRIHIKDMDPSMLIGFIIRSREDWTDWKTRILSGRGNSIVHILSEDTANHQARKEAIDEVEALDD.

Cys131 functions as the Nucleophile in the catalytic mechanism. Catalysis depends on residues Asp305 and His307.

It belongs to the peptidase C54 family.

The protein localises to the cytoplasm. It localises to the nucleus. The protein resides in the preautophagosomal structure. The catalysed reaction is [protein]-C-terminal L-amino acid-glycyl-phosphatidylethanolamide + H2O = [protein]-C-terminal L-amino acid-glycine + a 1,2-diacyl-sn-glycero-3-phosphoethanolamine. In terms of biological role, cysteine protease that plays a key role in cytoplasm to vacuole transport (Cvt) and autophagy by mediating both proteolytic activation and delipidation of ATG8. Required for selective autophagic degradation of the nucleus (nucleophagy) as well as for mitophagy which contributes to regulate mitochondrial quantity and quality by eliminating the mitochondria to a basal level to fulfill cellular energy requirements and preventing excess ROS production. The protease activity is required for proteolytic activation of ATG8: cleaves the C-terminal amino acid of ATG8 to reveal a C-terminal glycine. ATG8 ubiquitin-like activity requires the exposure of the glycine at the C-terminus for its conjugation to phosphatidylethanolamine (PE) and its insertion to membranes, which is necessary for autophagy. The ATG8-PE conjugate mediates tethering between adjacent membranes and stimulates membrane hemifusion, leading to expansion of the autophagosomal membrane during autophagy. In addition to the protease activity, also catalyzes deconjugation of PE-conjugated forms of ATG8 during macroautophagy: ATG8 delipidation is required to release the protein from membranes, which facilitates multiple events during macroautophagy, and especially for efficient autophagosome biogenesis, the assembly of ATG9-containing tubulovesicular clusters into phagophores/autophagosomes, and for the disassembly of PAS-associated ATG components. ATG8 delipidation by ATG4 also recycles ATG8-PE generated on inappropriate membranes to maintain a reservoir of unlipidated ATG8 that is required for autophagosome formation at the PAS. The chain is Probable cysteine protease atg4 (atg4) from Aspergillus clavatus (strain ATCC 1007 / CBS 513.65 / DSM 816 / NCTC 3887 / NRRL 1 / QM 1276 / 107).